The primary structure comprises 391 residues: GATA-binding factor 6-A (391 aa).

Residues G57 to S111 are disordered. Residues S66–S83 show a composition bias toward low complexity. The span at N96–S111 shows a compositional bias: polar residues. 2 GATA-type zinc fingers span residues C182–C206 and C236–C260. Residues A274–T355 form a disordered region. Residues T282–N291 are compositionally biased toward basic residues. A compositionally biased stretch (low complexity) spans K292–S319. A compositionally biased stretch (polar residues) spans G326–T355.

In terms of tissue distribution, in embryos, expressed in the presumptive heart mesoderm. In adults, expressed at high levels in heart, small intestine, and stomach and at lower levels in lung, pancreas and colon.

Its subcellular location is the nucleus. Functionally, transcriptional activator that binds 5'-GATA-3'-containing motifs within gene promoters. Regulates cardiac-specific transcription during embryogenesis and thereby cardiogenesis. This chain is GATA-binding factor 6-A (gata6-a), found in Xenopus laevis (African clawed frog).